The sequence spans 1186 residues: Atrophin-1 (1186 aa).

Disordered regions lie at residues methionine 1–threonine 604, alanine 618–asparagine 763, and valine 781–proline 858. The Nuclear localization signal motif lies at arginine 16–arginine 32. Residues lysine 17–serine 29 are compositionally biased toward basic and acidic residues. The residue at position 34 (serine 34) is a Phosphoserine. Basic and acidic residues predominate over residues glycine 45–serine 63. Serine 77, serine 79, serine 100, serine 102, and serine 106 each carry phosphoserine. Basic and acidic residues predominate over residues leucine 107–asparagine 127. Residues arginine 128 to serine 151 show a composition bias toward polar residues. Pro residues predominate over residues proline 157 to serine 173. 3 stretches are compositionally biased toward low complexity: residues proline 258 to proline 270, proline 349 to alanine 365, and serine 375 to serine 396. Residues serine 416–tryptophan 437 are compositionally biased toward polar residues. Over residues glutamine 484–serine 503 the composition is skewed to low complexity. An involved in binding BAIAP2 region spans residues histidine 513–proline 563. A compositionally biased stretch (pro residues) spans proline 537–histidine 549. 2 stretches are compositionally biased toward low complexity: residues serine 565 to serine 582 and alanine 618 to serine 628. Serine 628 bears the Phosphoserine mark. An N6-acetyllysine modification is found at lysine 637. At threonine 649 the chain carries Phosphothreonine. Phosphoserine is present on serine 657. Threonine 665 is modified (phosphothreonine). Composition is skewed to pro residues over residues glycine 689 to glycine 714 and serine 735 to lysine 748. Serine 735 is modified (phosphoserine; by MAPK8). A phosphoserine mark is found at serine 742 and serine 744. A compositionally biased stretch (basic and acidic residues) spans lysine 791–valine 835. The segment at aspartate 875–valine 890 is required for interaction with FAT1. Residue serine 892 is modified to Phosphoserine. Residues alanine 1029–arginine 1037 carry the Nuclear export signal motif. Arginine 1111 carries the post-translational modification Asymmetric dimethylarginine. Residue lysine 1179 forms a Glycyl lysine isopeptide (Lys-Gly) (interchain with G-Cter in SUMO2) linkage.

As to quaternary structure, interacts with NR2E1; the interaction represses the transcriptional activity of NR2E1. Interacts with BAIAP2, WWP1, WWP2, WWP3 and RERE. Interacts (via its N-terminus) with MTG8; the interaction enhances transcriptional repression of MTG8. Interacts with FAT1 (via a C-terminal domain). Interacts with PQBP1. Phosphorylated in vitro by MAPK8/JNK1 on Ser-735.

The protein localises to the nucleus. It is found in the cytoplasm. It localises to the perinuclear region. The protein resides in the cell junction. Transcriptional corepressor. Corepressor of MTG8 transcriptional repression. Recruits NR2E1 to repress transcription. Has some intrinsic repression activity. Promotes vascular smooth cell (VSMC) migration and orientation. In Pan troglodytes (Chimpanzee), this protein is Atrophin-1 (ATN1).